A 210-amino-acid chain; its full sequence is Ribosomal RNA large subunit methyltransferase E (210 aa).

The S-adenosyl-L-methionine site is built by G60, W62, D85, D101, and D126. The Proton acceptor role is filled by K166. Residues 191 to 200 (KPKASRDKSS) show a composition bias toward basic and acidic residues. Residues 191–210 (KPKASRDKSSETFLVARDLK) are disordered.

The protein belongs to the class I-like SAM-binding methyltransferase superfamily. RNA methyltransferase RlmE family.

It localises to the cytoplasm. The catalysed reaction is uridine(2552) in 23S rRNA + S-adenosyl-L-methionine = 2'-O-methyluridine(2552) in 23S rRNA + S-adenosyl-L-homocysteine + H(+). Specifically methylates the uridine in position 2552 of 23S rRNA at the 2'-O position of the ribose in the fully assembled 50S ribosomal subunit. This is Ribosomal RNA large subunit methyltransferase E from Bordetella bronchiseptica (strain ATCC BAA-588 / NCTC 13252 / RB50) (Alcaligenes bronchisepticus).